An 857-amino-acid polypeptide reads, in one-letter code: Glucans biosynthesis glucosyltransferase H (857 aa).

The next 6 helical transmembrane spans lie at 142–162, 196–216, 515–535, 572–592, 606–626, and 682–702; these read ILLALMIGQTIVAGWYMKGIL, ILILFGILFCWVSAGFWTALM, VFLTGVMSYLSAPLWFLFLVL, LFSTTIVLLFLPKLLSVILIW, TLSMLMEMLFSMLLAPVRMIF, and FLWWLAPIVGSLVLSIPVSVI.

This sequence belongs to the glycosyltransferase 2 family. OpgH subfamily.

Its subcellular location is the cell inner membrane. It participates in glycan metabolism; osmoregulated periplasmic glucan (OPG) biosynthesis. Its function is as follows. Involved in the biosynthesis of osmoregulated periplasmic glucans (OPGs). The protein is Glucans biosynthesis glucosyltransferase H of Pseudomonas putida (strain ATCC 700007 / DSM 6899 / JCM 31910 / BCRC 17059 / LMG 24140 / F1).